Here is a 745-residue protein sequence, read N- to C-terminus: Junction plakoglobin (745 aa).

The residue at position 1 (methionine 1) is an N-acetylmethionine. Threonine 14 carries an O-linked (GlcNAc) threonine glycan. A phosphoserine mark is found at serine 99 and serine 125. ARM repeat units follow at residues asparagine 132–lysine 171, lysine 172–histidine 215, arginine 216–leucine 255, glutamate 258–tyrosine 297, glycine 298–cysteine 341, proline 342–aspartate 381, alanine 383–cysteine 420, serine 423–serine 464, glutamate 470–leucine 510, proline 512–threonine 551, proline 574–glutamine 613, and lysine 615–arginine 661. The segment at asparagine 132–tyrosine 297 is interaction with DSC1 and DSG1. Serine 182 is modified (phosphoserine). The interval proline 574–arginine 661 is interaction with DSC1. Serine 665 and serine 730 each carry phosphoserine.

This sequence belongs to the beta-catenin family. Homodimer. Component of an E-cadherin/catenin adhesion complex composed of at least E-cadherin/CDH1 and gamma-catenin/JUP, and possibly alpha-catenin/CTNNA1; the complex is located to adherens junctions. The stable association of CTNNA1 is controversial as CTNNA1 was shown not to bind to F-actin when assembled in the complex. Interacts with MUC1. Interacts with CAV1. Interacts with PTPRJ. Interacts with DSG1. Interacts with DSC1 and DSC2. Interacts with PKP2. Interacts with PKP3 (via N-terminus); the interaction is required for PKP3 localization to desmosome cell-cell junctions. Interacts with DSG4. In terms of processing, may be phosphorylated by FER.

The protein resides in the cell junction. Its subcellular location is the adherens junction. It localises to the desmosome. The protein localises to the cytoplasm. It is found in the cytoskeleton. The protein resides in the cell membrane. Its subcellular location is the nucleus. In terms of biological role, common junctional plaque protein. The membrane-associated plaques are architectural elements in an important strategic position to influence the arrangement and function of both the cytoskeleton and the cells within the tissue. The presence of plakoglobin in both the desmosomes and in the intermediate junctions suggests that it plays a central role in the structure and function of submembranous plaques. Acts as a substrate for VE-PTP and is required by it to stimulate VE-cadherin function in endothelial cells. Can replace beta-catenin in E-cadherin/catenin adhesion complexes which are proposed to couple cadherins to the actin cytoskeleton. The polypeptide is Junction plakoglobin (Bos taurus (Bovine)).